A 258-amino-acid chain; its full sequence is Ribosomal RNA small subunit methyltransferase J (258 aa).

Residues 123–124 (ER) and Asp177 contribute to the S-adenosyl-L-methionine site. Residues 232–258 (IDGPKPSHSLEGKSSRYDIYPKKALKA) form a disordered region. Residues 239-252 (HSLEGKSSRYDIYP) are compositionally biased toward basic and acidic residues.

It belongs to the methyltransferase superfamily. RsmJ family.

The protein resides in the cytoplasm. It catalyses the reaction guanosine(1516) in 16S rRNA + S-adenosyl-L-methionine = N(2)-methylguanosine(1516) in 16S rRNA + S-adenosyl-L-homocysteine + H(+). Specifically methylates the guanosine in position 1516 of 16S rRNA. This chain is Ribosomal RNA small subunit methyltransferase J, found in Pseudomonas putida (strain GB-1).